The sequence spans 578 residues: Rhamnogalacturonate lyase (578 aa).

An N-terminal signal peptide occupies residues 1 to 27 (MHMNKPLQAWRTPLLTLIFVLPLTATG).

This sequence belongs to the polysaccharide lyase 4 family.

Its subcellular location is the secreted. The catalysed reaction is Endotype eliminative cleavage of L-alpha-rhamnopyranosyl-(1-&gt;4)-alpha-D-galactopyranosyluronic acid bonds of rhamnogalacturonan I domains in ramified hairy regions of pectin leaving L-rhamnopyranose at the reducing end and 4-deoxy-4,5-unsaturated D-galactopyranosyluronic acid at the non-reducing end.. Its function is as follows. Degrades the rhamnogalacturonan I (RG-I) backbone of pectin. Is required for the full virulence of E.chrysanthemi strain 3937 as it is involved in rotting of plant tissue. This chain is Rhamnogalacturonate lyase (rhiE), found in Dickeya dadantii (strain 3937) (Erwinia chrysanthemi (strain 3937)).